The chain runs to 204 residues: DNA-directed RNA polymerase III subunit RPC8 (204 aa).

Positions 158 to 178 (VDTSPTGPSSAEAASSSEELP) are disordered. Over residues 166–175 (SSAEAASSSE) the composition is skewed to low complexity.

The protein belongs to the eukaryotic RPB7/RPC8 RNA polymerase subunit family. Component of the RNA polymerase III complex consisting of 17 subunits: a ten-subunit horseshoe-shaped catalytic core composed of POLR3A/RPC1, POLR3B/RPC2, POLR1C/RPAC1, POLR1D/RPAC2, POLR3K/RPC10, POLR2E/RPABC1, POLR2F/RPABC2, POLR2H/RPABC3, POLR2K/RPABC4 and POLR2L/RPABC5; a mobile stalk composed of two subunits POLR3H/RPC8 and CRCP/RPC9, protruding from the core and functioning primarily in transcription initiation; and additional subunits homologous to general transcription factors of the RNA polymerase II machinery, POLR3C/RPC3-POLR3F/RPC6-POLR3G/RPC7 heterotrimer required for transcription initiation and POLR3D/RPC4-POLR3E/RPC5 heterodimer involved in both transcription initiation and termination. Interacts with CRCP/RPC9. POLR3H/RPC8 and CRCP/RPC9 probably form a Pol III subcomplex.

The protein resides in the nucleus. In terms of biological role, DNA-dependent RNA polymerase catalyzes the transcription of DNA into RNA using the four ribonucleoside triphosphates as substrates. Specific peripheric component of RNA polymerase III (Pol III) which synthesizes small non-coding RNAs including 5S rRNA, snRNAs, tRNAs and miRNAs from at least 500 distinct genomic loci. With CRCP/RPC9 forms a mobile stalk that protrudes from Pol III core and functions primarily in transcription initiation. Pol III plays a key role in sensing and limiting infection by intracellular bacteria and DNA viruses. Acts as nuclear and cytosolic DNA sensor involved in innate immune response. Can sense non-self dsDNA that serves as template for transcription into dsRNA. The non-self RNA polymerase III transcripts, such as Epstein-Barr virus-encoded RNAs (EBERs) induce type I interferon and NF-kappa-B through the RIG-I pathway. The sequence is that of DNA-directed RNA polymerase III subunit RPC8 (POLR3H) from Bos taurus (Bovine).